The chain runs to 1064 residues: Rab GTPase-activating protein 1 (1064 aa).

Residues 1 to 101 (MDDKASVGKI…SNQLSASSTI (101 aa)) are disordered. Over residues 7 to 22 (VGKISVSSDSVSTLNS) the composition is skewed to low complexity. A Phosphoserine modification is found at S42. Over residues 91–101 (LSNQLSASSTI) the composition is skewed to polar residues. A PID domain is found at 137–293 (EDSVVFNKLT…IFTFSVSLEI (157 aa)). S355 carries the phosphoserine modification. The interval 478–520 (RERRKTTASPSVRLPQSGSQSSMIPSPPEDDEEEDNDEPLLSG) is disordered. Polar residues predominate over residues 484-501 (TASPSVRLPQSGSQSSMI). Positions 505-515 (PEDDEEEDNDE) are enriched in acidic residues. A Rab-GAP TBC domain is found at 561 to 747 (GVPEALRGEV…HIIDLLLCEG (187 aa)). Positions 805–1038 (SQKKLKKFEK…HLGLALSEVQ (234 aa)) form a coiled coil. T991 carries the post-translational modification Phosphothreonine.

In terms of assembly, interacts with RAB6A and tubulin gamma.

It is found in the cytoplasm. The protein resides in the cytosol. The protein localises to the cytoskeleton. It localises to the microtubule organizing center. Its subcellular location is the centrosome. Its function is as follows. May act as a GTPase-activating protein of RAB6A. May play a role in microtubule nucleation by centrosome. May participate in a RAB6A-mediated pathway involved in the metaphase-anaphase transition. This is Rab GTPase-activating protein 1 from Mus musculus (Mouse).